The chain runs to 356 residues: Cyclin-D4-1 (356 aa).

Belongs to the cyclin family. Cyclin D subfamily.

The protein is Cyclin-D4-1 (CYCD4-1) of Oryza sativa subsp. japonica (Rice).